A 471-amino-acid chain; its full sequence is G2/mitotic-specific cyclin-1 (471 aa).

It belongs to the cyclin family. Cyclin AB subfamily.

Functionally, essential for the control of the cell cycle at the G2/M (mitosis) transition. Interacts with the CDC2 protein kinase to form MPF. G2/M cyclins accumulate steadily during G2 and are abruptly destroyed at mitosis. The protein is G2/mitotic-specific cyclin-1 (CLB1) of Saccharomyces cerevisiae (strain ATCC 204508 / S288c) (Baker's yeast).